The following is a 606-amino-acid chain: Pescadillo homolog (606 aa).

Positions 346–447 (LSTSLFSPYT…KILLEGPYGQ (102 aa)) constitute a BRCT domain. Positions 461–497 (YEGAYDPAAGPLGPSGVEQESESEADEVSEEDEEDQG) are disordered. Residues 479 to 496 (QESESEADEVSEEDEEDQ) are compositionally biased toward acidic residues.

The protein belongs to the pescadillo family. In terms of assembly, component of the NOP7 complex, composed of ERB1, NOP7 and YTM1. The complex is held together by ERB1, which interacts with NOP7 via its N-terminal domain and with YTM1 via a high-affinity interaction between the seven-bladed beta-propeller domains of the 2 proteins. The NOP7 complex associates with the 66S pre-ribosome.

It localises to the nucleus. The protein resides in the nucleolus. Its subcellular location is the nucleoplasm. Component of the NOP7 complex, which is required for maturation of the 25S and 5.8S ribosomal RNAs and formation of the 60S ribosome. The polypeptide is Pescadillo homolog (Laccaria bicolor (strain S238N-H82 / ATCC MYA-4686) (Bicoloured deceiver)).